A 240-amino-acid chain; its full sequence is MLMPMPEPDEAPVAALVNIAGGLAGGDRLSFTMTLDAQARATLCTAAAEKVYRSLGPDTDISNILTAGPEAALEWLPQETILFNGARLRRRMNVSLATDARLLATETIIFGRTAHQETFLNGHFSDHWRLWRDGKLLWADNFRLPDPPARVLDHPFGLNRHPAMATIVLAATDAAAYRDLLREKWQDETGKGVTVPRPGLLLGRLIGSATAVRQGVEEAMIILRTHAMHGPARLPRLWLS.

This sequence belongs to the UreD family. In terms of assembly, ureD, UreF and UreG form a complex that acts as a GTP-hydrolysis-dependent molecular chaperone, activating the urease apoprotein by helping to assemble the nickel containing metallocenter of UreC. The UreE protein probably delivers the nickel.

Its subcellular location is the cytoplasm. Required for maturation of urease via the functional incorporation of the urease nickel metallocenter. This Granulibacter bethesdensis (strain ATCC BAA-1260 / CGDNIH1) protein is Urease accessory protein UreD.